We begin with the raw amino-acid sequence, 185 residues long: Ribosome-recycling factor (185 aa).

The protein belongs to the RRF family.

The protein resides in the cytoplasm. Functionally, responsible for the release of ribosomes from messenger RNA at the termination of protein biosynthesis. May increase the efficiency of translation by recycling ribosomes from one round of translation to another. The chain is Ribosome-recycling factor from Buchnera aphidicola subsp. Schizaphis graminum (strain Sg).